Consider the following 449-residue polypeptide: MPKEDCKYWDKCYQQNPAHLSKYNHPKKQQEHEVDGAEGKKVAPKRSASSQSGEQKKEEQTEPVNKDKSNTSASSTEMVNKDTAKGSYEAETEELHKEAMSNISGKNYMEILEKRIRLSVQKEYDNLCESNEFIRHKFLVEMPPDFYEFWKFVGSLKIDPAKPKDAGLEHLDKVFQLQLVGPFEFLAGKFHGAKLGEPGDYLRHWRFYYDPPEFQTIFVRRGTGIHYGYWRDVPQDKENLLIARNDSAKGCQFQFVAGNAFDAFLYYLEHDFAATPFSCGQLAGTKKAVAKYLSDNSLELAQLDRLQRERNKRVVAKTFHRAGIVVPFDQKTEVGYRPLAVSDSELKKMLAMLERKDVDNGAAKQAVLEKLQPVANAANIAVDESDFGSALELGIDMFCSGHKELHMLASSLLVPAYSMLSRPQFIAIAKAHMEQRSREDNLSIFDVLK.

The CCHC-type zinc finger occupies 3 to 28 (KEDCKYWDKCYQQNPAHLSKYNHPKK). Positions 18-93 (AHLSKYNHPK…AKGSYEAETE (76 aa)) are disordered. Basic and acidic residues-rich tracts occupy residues 28 to 41 (KQQEHEVDGAEGKK) and 54 to 69 (EQKKEEQTEPVNKDKS). A Phosphoserine modification is found at Ser72. The active-site Proton donor is the Glu384.

It belongs to the HPF1 family.

The protein resides in the chromosome. Its subcellular location is the nucleus. In terms of biological role, cofactor for serine ADP-ribosylation that confers serine specificity on Parp. Switches the amino acid specificity of Parp from aspartate or glutamate to serine residues. Acts by completing the active site of Parp: forms a composite active site composed of residues from HPF1/CG1218 and Parp. In Drosophila melanogaster (Fruit fly), this protein is Histone PARylation factor 1-like.